A 636-amino-acid chain; its full sequence is Biosynthetic arginine decarboxylase (636 aa).

Lys-101 bears the N6-(pyridoxal phosphate)lysine mark. 286–296 (FDVGGGLAVDY) contributes to the substrate binding site.

The protein belongs to the Orn/Lys/Arg decarboxylase class-II family. SpeA subfamily. It depends on Mg(2+) as a cofactor. The cofactor is pyridoxal 5'-phosphate.

It catalyses the reaction L-arginine + H(+) = agmatine + CO2. It participates in amine and polyamine biosynthesis; agmatine biosynthesis; agmatine from L-arginine: step 1/1. Catalyzes the biosynthesis of agmatine from arginine. The chain is Biosynthetic arginine decarboxylase from Shewanella frigidimarina (strain NCIMB 400).